The chain runs to 461 residues: Glucan endo-1,3-beta-glucosidase (461 aa).

A signal peptide spans 1-23; the sequence is MPLLILLMLLAAGAAGAESATPS. The Proton donor role is filled by Glu123. The Nucleophile role is filled by Glu265. The segment at 350 to 375 is disordered; sequence GASVAPTPSPNPSPNPSPKPAPSGGG. Residues 356–370 show a composition bias toward pro residues; the sequence is TPSPNPSPNPSPKPA. A disulfide bridge links Cys378 with Cys439.

This sequence belongs to the glycosyl hydrolase 17 family. Post-translationally, contains two additional disulfide bonds.

The enzyme catalyses Hydrolysis of (1-&gt;3)-beta-D-glucosidic linkages in (1-&gt;3)-beta-D-glucans.. Its function is as follows. Is thought to be an important plant defense-related product against fungal pathogens. This is Glucan endo-1,3-beta-glucosidase (GLC1) from Triticum aestivum (Wheat).